The following is a 194-amino-acid chain: Cysteine and glycine-rich protein 3 (194 aa).

An interaction with TCAP region spans residues 1–5; sequence MPNWG. Residues 10–61 form the LIM zinc-binding 1 domain; it reads CGACEKTVYHAEEIQCNGRSFHKTCFHCMACRKALDSTTVAAHESEIYCKVC. The Nuclear localization signal motif lies at 64-69; it reads RRYGPK. The interaction with CLF2 stretch occupies residues 94-106; sequence QSPKQARSATTSS. Ser95 and Ser153 each carry phosphoserine. The 52-residue stretch at 120 to 171 folds into the LIM zinc-binding 2 domain; it reads CPRCGKSVYAAEKVMGGGKPWHKTCFRCAICGKSLESTNVTDKDGELYCKVC.

Self-associates. Oligomeric in the cytoplasm and monomeric in the nucleus. Homooligomers preferentially form along the actin cytoskeleton. Interacts with TCAP, LDHD, MYOD1, MYOG, ACTN2, NRAP, MYF6. Interacts (via N-terminus) with GLRX3 (via C-terminus) and PPP3CA; GLRX3 and calcineurin compete for interaction with CSRP3. Interacts with CFL2; the stoichiometry influences F-actin depolymerization and possibly two molecules of CFL2 can interact with one molecule of CSRP3 resulting in the highest functional impact; the interaction is stronger with phosphorylated CFL2.

It is found in the nucleus. The protein resides in the cytoplasm. It localises to the cytoskeleton. Its subcellular location is the myofibril. The protein localises to the sarcomere. It is found in the z line. In terms of biological role, positive regulator of myogenesis. Acts as a cofactor for myogenic bHLH transcription factors such as MYOD1, and probably MYOG and MYF6. Enhances the DNA-binding activity of the MYOD1:TCF3 isoform E47 complex and may promote formation of a functional MYOD1:TCF3 isoform E47:MEF2A complex involved in myogenesis. Plays a crucial and specific role in the organization of cytosolic structures in cardiomyocytes. Could play a role in mechanical stretch sensing. May be a scaffold protein that promotes the assembly of interacting proteins at Z-line structures. It is essential for calcineurin anchorage to the Z line. Required for stress-induced calcineurin-NFAT activation. The role in regulation of cytoskeleton dynamics by association with CFL2 is reported conflictingly. Proposed to contribute to the maintenance of muscle cell integrity through an actin-based mechanism. Can directly bind to actin filaments, cross-link actin filaments into bundles without polarity selectivity and protect them from dilution- and cofilin-mediated depolymerization; the function seems to involve its self-association. In vitro can inhibit PKC/PRKCA activity. Proposed to be involved in cardiac stress signaling by down-regulating excessive PKC/PRKCA signaling. The sequence is that of Cysteine and glycine-rich protein 3 (CSRP3) from Bos taurus (Bovine).